The primary structure comprises 81 residues: HssA/B-like protein 5 (81 aa).

The protein belongs to the hssA/B family.

The sequence is that of HssA/B-like protein 5 (hssl5) from Dictyostelium discoideum (Social amoeba).